The chain runs to 247 residues: ATP synthase subunit a (247 aa).

A run of 6 helical transmembrane segments spans residues 26–46, 85–105, 115–135, 141–161, 178–198, and 205–225; these read ITNN…LFYV, YFPL…IGLL, IIFT…INFF, FFNL…LVVI, FANM…IFNV, and ISFL…CIAI.

It belongs to the ATPase A chain family. F-type ATPases have 2 components, CF(1) - the catalytic core - and CF(0) - the membrane proton channel. CF(1) has five subunits: alpha(3), beta(3), gamma(1), delta(1), epsilon(1). CF(0) has three main subunits: a, b and c.

The protein localises to the mitochondrion inner membrane. Functionally, mitochondrial membrane ATP synthase (F(1)F(0) ATP synthase or Complex V) produces ATP from ADP in the presence of a proton gradient across the membrane which is generated by electron transport complexes of the respiratory chain. F-type ATPases consist of two structural domains, F(1) - containing the extramembraneous catalytic core and F(0) - containing the membrane proton channel, linked together by a central stalk and a peripheral stalk. During catalysis, ATP synthesis in the catalytic domain of F(1) is coupled via a rotary mechanism of the central stalk subunits to proton translocation. Key component of the proton channel; it may play a direct role in the translocation of protons across the membrane. The chain is ATP synthase subunit a (ATP6) from Acanthamoeba castellanii (Amoeba).